The following is an 87-amino-acid chain: Large ribosomal subunit protein bL27 (87 aa).

Belongs to the bacterial ribosomal protein bL27 family.

This Dechloromonas aromatica (strain RCB) protein is Large ribosomal subunit protein bL27.